The primary structure comprises 238 residues: Ribonuclease PH (238 aa).

Residues Arg-86 and Gly-124–Arg-126 each bind phosphate.

This sequence belongs to the RNase PH family. Homohexameric ring arranged as a trimer of dimers.

The catalysed reaction is tRNA(n+1) + phosphate = tRNA(n) + a ribonucleoside 5'-diphosphate. Its function is as follows. Phosphorolytic 3'-5' exoribonuclease that plays an important role in tRNA 3'-end maturation. Removes nucleotide residues following the 3'-CCA terminus of tRNAs; can also add nucleotides to the ends of RNA molecules by using nucleoside diphosphates as substrates, but this may not be physiologically important. Probably plays a role in initiation of 16S rRNA degradation (leading to ribosome degradation) during starvation. The polypeptide is Ribonuclease PH (Dichelobacter nodosus (strain VCS1703A)).